Reading from the N-terminus, the 423-residue chain is Zinc transporter ZIP13 (423 aa).

Over 1–15 the chain is Lumenal; sequence MPGCPCPGIGMAGQR. A helical transmembrane segment spans residues 16 to 36; sequence LLFLAALALELLGGAGGSQQA. The Cytoplasmic portion of the chain corresponds to 37–68; sequence LRSRGVAAACRLDSKESESWGALLSGERLETW. Residues 69–89 traverse the membrane as a helical segment; the sequence is ICSLLGSLMVGLSGVFPLLVI. At 90 to 108 the chain is on the lumenal side; the sequence is PLEMGTTLRSEAGARRLKQ. The chain crosses the membrane as a helical span at residues 109–129; the sequence is LLSFALGGLLGNVFLHLLPEA. Over 130–149 the chain is Cytoplasmic; sequence WAYTNSASSGGERQSLQQQQ. The helical transmembrane segment at 150 to 170 threads the bilayer; sequence QLGLWVIAGFLTFLVLEKLFF. The Lumenal segment spans residues 171–235; that stretch reads DSKGKEETSQ…TIDNFTHGLA (65 aa). A helical membrane pass occupies residues 236-256; that stretch reads VAASFLVSKKIGLLTTMAILL. The XEXPHE-motif signature appears at 257–262; it reads HEIPHE. Residues 257 to 278 are Cytoplasmic-facing; sequence HEIPHEVGDFAILLRAGFDRWS. The chain crosses the membrane as a helical span at residues 279 to 299; the sequence is AAKLQLSTALGGLLGACFAIC. The Lumenal portion of the chain corresponds to 300-368; it reads AQSPKGVGTG…RAPPPATEET (69 aa). A helical transmembrane segment spans residues 369 to 389; sequence VAWILPFTSGGFLYIALVNVL. The Cytoplasmic segment spans residues 390–401; sequence PDLLEEDDPWRS. A helical transmembrane segment spans residues 402–422; the sequence is LQQVLLLCAGIVVMVLFSVFV. Position 423 (glutamate 423) is a topological domain, lumenal.

The protein belongs to the ZIP transporter (TC 2.A.5) family. In terms of assembly, homodimer.

Its subcellular location is the golgi apparatus membrane. It is found in the cytoplasmic vesicle membrane. The protein resides in the endoplasmic reticulum membrane. It catalyses the reaction Zn(2+)(in) = Zn(2+)(out). Its function is as follows. Functions as a zinc transporter transporting Zn(2+) from the Golgi apparatus to the cytosol and thus influences the zinc level at least in areas of the cytosol. May regulate beige adipocyte differentiation. This chain is Zinc transporter ZIP13, found in Bos taurus (Bovine).